A 439-amino-acid polypeptide reads, in one-letter code: Forkhead box protein J1-A (439 aa).

The fork-head DNA-binding region spans Lys124 to Leu218. The segment at Glu273–Lys293 is disordered. The segment covering Ser284–Lys293 has biased composition (basic residues).

The protein belongs to the FOXJ1 family. As to expression, expressed in two independent areas of stage 10-11 embryos; in the dorsal blastopore lip (Spemann organizer) and shortly after in the ectodermal cells of the animal cap. As development proceeds, cells of the animal cap contribute to the epidermis and show a spotty pattern, which suggests expression in ciliated epidermal cells. Distribution of these cells is uniform in the trunk area of the embryo but more random in the head, being practically absent in the cement gland and olfactory placode. The spotted pattern becomes more dispersed as embryos grow in size. Due to cell movements during gastrulation, expression in the dorsal lip becomes located in the dorsal midline with expression restricted to the neuroectoderm. Expressed transiently in cells of the newly formed neural floor plate in the tail of older tadpoles.

It localises to the nucleus. In terms of biological role, key transcription factor required for motile ciliogenesis. Activates genes essential for motile cilia formation and function. Required for ciliogenesis in multiciliated cells. This is Forkhead box protein J1-A (foxj1-a) from Xenopus laevis (African clawed frog).